The primary structure comprises 810 residues: Lon protease (810 aa).

One can recognise a Lon N-terminal domain in the interval 40 to 233 (LIIVPVRGFV…MVAKLLAQRI (194 aa)). 385-392 (GPPGVGKT) provides a ligand contact to ATP. Positions 621 to 802 (LSVPGVATGL…DDAMAAAFEG (182 aa)) constitute a Lon proteolytic domain. Catalysis depends on residues Ser-708 and Lys-751.

It belongs to the peptidase S16 family. In terms of assembly, homohexamer. Organized in a ring with a central cavity.

Its subcellular location is the cytoplasm. It carries out the reaction Hydrolysis of proteins in presence of ATP.. ATP-dependent serine protease that mediates the selective degradation of mutant and abnormal proteins as well as certain short-lived regulatory proteins. Required for cellular homeostasis and for survival from DNA damage and developmental changes induced by stress. Degrades polypeptides processively to yield small peptide fragments that are 5 to 10 amino acids long. Binds to DNA in a double-stranded, site-specific manner. In Methylocella silvestris (strain DSM 15510 / CIP 108128 / LMG 27833 / NCIMB 13906 / BL2), this protein is Lon protease.